We begin with the raw amino-acid sequence, 618 residues long: Chaperone protein HscA homolog (618 aa).

It belongs to the heat shock protein 70 family.

In terms of biological role, chaperone involved in the maturation of iron-sulfur cluster-containing proteins. Has a low intrinsic ATPase activity which is markedly stimulated by HscB. The polypeptide is Chaperone protein HscA homolog (Variovorax paradoxus (strain S110)).